The following is a 140-amino-acid chain: Ribonuclease P protein component (140 aa).

It belongs to the RnpA family. As to quaternary structure, consists of a catalytic RNA component (M1 or rnpB) and a protein subunit.

The enzyme catalyses Endonucleolytic cleavage of RNA, removing 5'-extranucleotides from tRNA precursor.. RNaseP catalyzes the removal of the 5'-leader sequence from pre-tRNA to produce the mature 5'-terminus. It can also cleave other RNA substrates such as 4.5S RNA. The protein component plays an auxiliary but essential role in vivo by binding to the 5'-leader sequence and broadening the substrate specificity of the ribozyme. In Nostoc punctiforme (strain ATCC 29133 / PCC 73102), this protein is Ribonuclease P protein component.